Consider the following 94-residue polypeptide: Large ribosomal subunit protein bL25 (94 aa).

The protein belongs to the bacterial ribosomal protein bL25 family. As to quaternary structure, part of the 50S ribosomal subunit; part of the 5S rRNA/L5/L18/L25 subcomplex. Contacts the 5S rRNA. Binds to the 5S rRNA independently of L5 and L18.

Its function is as follows. This is one of the proteins that binds to the 5S RNA in the ribosome where it forms part of the central protuberance. The chain is Large ribosomal subunit protein bL25 from Klebsiella pneumoniae subsp. pneumoniae (strain ATCC 700721 / MGH 78578).